A 233-amino-acid chain; its full sequence is Ion-translocating oxidoreductase complex subunit E (233 aa).

5 helical membrane-spanning segments follow: residues 22-42 (LLGL…LGLG), 69-89 (IPIY…LINA), 93-113 (GLYQ…IVVG), 128-148 (ALDG…LGSI), and 182-202 (PMLL…LLAA).

It belongs to the NqrDE/RnfAE family. As to quaternary structure, the complex is composed of six subunits: RnfA, RnfB, RnfC, RnfD, RnfE and RnfG.

Its subcellular location is the cell inner membrane. Its function is as follows. Part of a membrane-bound complex that couples electron transfer with translocation of ions across the membrane. The protein is Ion-translocating oxidoreductase complex subunit E of Erwinia tasmaniensis (strain DSM 17950 / CFBP 7177 / CIP 109463 / NCPPB 4357 / Et1/99).